A 303-amino-acid chain; its full sequence is Zinc transporter ZIP9-B (303 aa).

A helical membrane pass occupies residues 7-27 (ISLLSLAMLVGCYVSGIIPLA). N-linked (GlcNAc...) asparagine glycosylation occurs at N29. Transmembrane regions (helical) follow at residues 35-55 (LKLV…AVIV), 102-122 (AYIG…DQIG), 142-162 (ITTT…LGAA), 172-192 (LIVF…LVSF), and 206-226 (HLLV…LGLS). N237 is a glycosylation site (N-linked (GlcNAc...) asparagine). Transmembrane regions (helical) follow at residues 240-260 (GVAM…HVLP) and 282-302 (LEVC…IGHQ).

It belongs to the ZIP transporter (TC 2.A.5) family.

Its subcellular location is the golgi apparatus. The protein resides in the trans-Golgi network membrane. It localises to the cell membrane. It is found in the cytoplasm. The protein localises to the perinuclear region. Its subcellular location is the mitochondrion. The protein resides in the nucleus. The enzyme catalyses Zn(2+)(in) = Zn(2+)(out). Functionally, transports zinc ions across cell and organelle membranes into the cytoplasm and regulates intracellular zinc homeostasis. Participates in the zinc ions efflux out of the secretory compartments. Regulates intracellular zinc level, resulting in the enhancement of AKT1 and MAPK3/MAPK1 (Erk1/2) phosphorylation in response to the BCR activation. Also functions as a membrane androgen receptor that mediates, through a G protein, the non-classical androgen signaling pathway, characterized by the activation of MAPK3/MAPK1 (Erk1/2) and transcription factors CREB1 or ATF1. Moreover, has dual functions as a membrane-bound androgen receptor and as an androgen-dependent zinc transporter both of which are mediated through an inhibitory G protein (Gi) that mediates both MAP kinase and zinc signaling leading to the androgen-dependent apoptotic process. The chain is Zinc transporter ZIP9-B (slc39a9-b) from Xenopus laevis (African clawed frog).